The sequence spans 482 residues: tRNA modification GTPase MnmE (482 aa).

3 residues coordinate (6S)-5-formyl-5,6,7,8-tetrahydrofolate: Arg25, Glu82, and Lys135. Residues 231–404 form the TrmE-type G domain; that stretch reads GIKVVIAGQP…LRRVLLDIAG (174 aa). A K(+)-binding site is contributed by Asn241. Residues 241-246, 260-266, 285-288, and 385-387 contribute to the GTP site; these read NAGKSS, TPIAGTT, DTAG, and SAR. Ser245 provides a ligand contact to Mg(2+). K(+) is bound by residues Thr260, Ile262, and Thr265. Residue Thr266 coordinates Mg(2+). Lys482 is a (6S)-5-formyl-5,6,7,8-tetrahydrofolate binding site.

Belongs to the TRAFAC class TrmE-Era-EngA-EngB-Septin-like GTPase superfamily. TrmE GTPase family. As to quaternary structure, homodimer. Heterotetramer of two MnmE and two MnmG subunits. Requires K(+) as cofactor.

It is found in the cytoplasm. Functionally, exhibits a very high intrinsic GTPase hydrolysis rate. Involved in the addition of a carboxymethylaminomethyl (cmnm) group at the wobble position (U34) of certain tRNAs, forming tRNA-cmnm(5)s(2)U34. This chain is tRNA modification GTPase MnmE, found in Paracidovorax citrulli (strain AAC00-1) (Acidovorax citrulli).